The primary structure comprises 503 residues: Maturase K (503 aa).

This sequence belongs to the intron maturase 2 family. MatK subfamily.

The protein resides in the plastid. It is found in the chloroplast. Its function is as follows. Usually encoded in the trnK tRNA gene intron. Probably assists in splicing its own and other chloroplast group II introns. This Rosa carolina (Pasture rose) protein is Maturase K.